The sequence spans 616 residues: Centrosomal protein of 70 kDa (616 aa).

Coiled coils occupy residues 96 to 210 (EETT…EEER) and 273 to 335 (NYKG…NIKL). One copy of the TPR repeat lies at 502–535 (NGVFPRMNEVYTRLGEMNNAVRNLQELLELDSSS).

In terms of assembly, directly interacts with tubulin-gamma; this interaction determines centrosomal localization.

The protein resides in the cytoplasm. Its subcellular location is the cytoskeleton. The protein localises to the microtubule organizing center. It is found in the centrosome. Plays a role in the organization of both preexisting and nascent microtubules in interphase cells. During mitosis, required for the organization and orientation of the mitotic spindle. This Mus musculus (Mouse) protein is Centrosomal protein of 70 kDa (Cep70).